A 1151-amino-acid chain; its full sequence is Phospholipid-transporting ATPase NEO1 (1151 aa).

Disordered stretches follow at residues 1-21 (MPNPPSFKSHKQNLFNSNNNQ) and 73-95 (LDNFSNHSSDSHRKSSNTDTHPL). Residues 1-184 (MPNPPSFKSH…LSNAKYNAVT (184 aa)) are Extracellular-facing. The span at 12-21 (QNLFNSNNNQ) shows a compositional bias: polar residues. The tract at residues 51–104 (EPLSKHNTVGDRESFEMRTVDDLDNFSNHSSDSHRKSSNTDTHPLMYDNRLSQD) is required for endosome-to-Golgi sorting. Serine 102 bears the Phosphoserine mark. The chain crosses the membrane as a helical span at residues 185–205 (FVPTLLYEQFKFFYNLYFLVV). The Cytoplasmic segment spans residues 206–209 (ALSQ). The chain crosses the membrane as a helical span at residues 210–230 (AVPALRIGYLSSYIVPLAFVL). Over 231-367 (TVTMAKEAID…TSNPLSVDNT (137 aa)) the chain is Extracellular. A helical membrane pass occupies residues 368-388 (LWANTVLASSGFCIACVVYTG). Topologically, residues 389–416 (RDTRQAMNTTTAKVKTGLLELEINSISK) are cytoplasmic. Residues 417 to 437 (ILCACVFALSILLVAFAGFHN) form a helical membrane-spanning segment. Position 438 (aspartate 438) is a topological domain, extracellular. Residues 439–459 (DWYIDILRYLILFSTIIPVSL) traverse the membrane as a helical segment. The Cytoplasmic portion of the chain corresponds to 460 to 947 (RVNLDLAKSV…KLAQFVMHRG (488 aa)). Catalysis depends on aspartate 503, which acts as the 4-aspartylphosphate intermediate. Aspartate 503, lysine 504, and threonine 505 together coordinate ATP. Residue aspartate 503 participates in Mg(2+) binding. Threonine 505 lines the Mg(2+) pocket. The residue at position 551 (serine 551) is a Phosphoserine. Glutamate 597, phenylalanine 640, serine 642, lysine 645, lysine 664, arginine 693, threonine 694, threonine 774, glycine 775, aspartate 776, arginine 856, and lysine 862 together coordinate ATP. Residue aspartate 882 participates in Mg(2+) binding. Asparagine 885 and aspartate 886 together coordinate ATP. Position 886 (aspartate 886) interacts with Mg(2+). The chain crosses the membrane as a helical span at residues 948-968 (LIIAICQAVYSICSLFEPIAL). The Extracellular portion of the chain corresponds to 969-970 (YQ). The chain crosses the membrane as a helical span at residues 971–991 (GWLMVGYATCYTMAPVFSLTL). At 992–1020 (DHDIEESLTKIYPELYKELTEGKSLSYKT) the chain is on the cytoplasmic side. The chain crosses the membrane as a helical span at residues 1021-1041 (FFVWVLLSLFQGSVIQLFSQA). At 1042 to 1052 (FTSLLDTDFTR) the chain is on the extracellular side. Residues 1053 to 1073 (MVAISFTALVVNELIMVALEI) traverse the membrane as a helical segment. At 1074–1078 (YTWNK) the chain is on the cytoplasmic side. A helical transmembrane segment spans residues 1079 to 1099 (TMLVTEIATLLFYIVSVPFLG). The Extracellular segment spans residues 1100 to 1109 (DYFDLGYMTT). Residues 1110–1130 (VNYYAGLLVILLISIFPVWTA) traverse the membrane as a helical segment. Over 1131–1151 (KAIYRRLHPPSYAKVQEFATP) the chain is Cytoplasmic. A required for endosomal targeting region spans residues 1131 to 1151 (KAIYRRLHPPSYAKVQEFATP).

Belongs to the cation transport ATPase (P-type) (TC 3.A.3) family. Type IV subfamily. In terms of assembly, interacts with MON2. Interacts with ANY1. Functions without a CDC50/LEM3 family accessory subunit. Requires Mg(2+) as cofactor.

The protein localises to the endosome membrane. It localises to the golgi apparatus membrane. The catalysed reaction is ATP + H2O + phospholipidSide 1 = ADP + phosphate + phospholipidSide 2.. It carries out the reaction a 1,2-diacyl-sn-glycero-3-phospho-L-serine(out) + ATP + H2O = a 1,2-diacyl-sn-glycero-3-phospho-L-serine(in) + ADP + phosphate + H(+). It catalyses the reaction a 1,2-diacyl-sn-glycero-3-phosphoethanolamine(out) + ATP + H2O = a 1,2-diacyl-sn-glycero-3-phosphoethanolamine(in) + ADP + phosphate + H(+). In terms of biological role, flippase that catalyzes the hydrolysis of ATP coupled to the transport of lysophosphatidylserine, phosphatidylethanolamine, and phosphatidylserine from the lumenal to the cytosolic leaflet of the Golgi apparatus membrane and ensures the maintenance of asymmetric distribution of phospholipids. Does not appear to transport phosphatidylcholine or sphingomyelin. May be involved in recycling from endosomes by driving the formation of SNX3-dependent recycling tubules. Required for COPI retrograde transport from the Golgi to the endoplasmic reticulum, Golgi-endosome trafficking, and Golgi-dependent protein glycosylation. The chain is Phospholipid-transporting ATPase NEO1 from Saccharomyces cerevisiae (strain ATCC 204508 / S288c) (Baker's yeast).